The primary structure comprises 3298 residues: Protocadherin-16 (3298 aa).

Positions 1-42 are cleaved as a signal peptide; the sequence is MQKELGIVPSCPGMKSPRPHLLLPLLLLLLLLLGAGVPGAWG. Cadherin domains lie at 43–143, 144–255, 256–362, 367–472, 474–578, 579–685, 686–790, 791–894, 895–1000, 1001–1111, 1112–1211, 1218–1324, 1333–1436, 1437–1546, 1547–1649, 1650–1751, 1752–1855, 1856–1960, 1965–2068, 2069–2171, 2172–2277, 2278–2376, 2377–2482, 2483–2602, 2603–2706, 2707–2813, and 2814–2933; these read QAGS…APAF, PQAR…APAF, NQSR…QPSM, LSAD…APAF, RQLY…EPQF, QRTF…PPQF, YPRE…PPIF, EQLQ…SPAF, PAPE…APRF, NSPT…DPTF, LAVA…SPTF, AGGG…PPDL, VPVV…APAF, ARDP…APVF, ASPS…APTF, QQQE…APTF, GSAH…APAF, PVPA…APTF, LRLR…GPRF, PRAS…APRF, LRPH…RPTI, PQPW…APAF, SQSL…APSF, TLSH…PPVF, TRAS…GPAF, PLNL…DPVF, and LAPA…APDL. At 43-2940 the chain is on the extracellular side; it reads QAGSLDLQID…PDLNLLLVGA (2898 aa). Asn217, Asn256, and Asn402 each carry an N-linked (GlcNAc...) asparagine glycan. A glycan (N-linked (GlcNAc...) asparagine) is linked at Asn584. The N-linked (GlcNAc...) asparagine glycan is linked to Asn1249. An N-linked (GlcNAc...) asparagine glycan is attached at Asn1521. Asn1718 carries an N-linked (GlcNAc...) asparagine glycan. Residue Asn1996 is glycosylated (N-linked (GlcNAc...) asparagine). The segment at 2065-2094 is disordered; sequence GPRFPRASSEATIRENAPPGTPIVSPRAVH. N-linked (GlcNAc...) asparagine glycans are attached at residues Asn2361, Asn2428, and Asn2569. 3 N-linked (GlcNAc...) asparagine glycosylation sites follow: Asn2761, Asn2792, and Asn2862. A helical membrane pass occupies residues 2941–2961; the sequence is VAASLGVVVVLALAALVLGLV. Residues 2962 to 3298 lie on the Cytoplasmic side of the membrane; the sequence is RARSRKAEAA…EPPDDTELHI (337 aa). Residues 2986–3040 form a disordered region; sequence LQKLGREPPSPPPSEHLYHQTLPSYGGPGAGGPYPRGGSLDPSHSSGRGSAEAAE. The segment covering 3011–3020 has biased composition (gly residues); the sequence is GGPGAGGPYP. At Ser3055 the chain carries Phosphoserine. 2 disordered regions span residues 3062 to 3082 and 3233 to 3298; these read ARGP…TSCE and ASHR…ELHI. 2 stretches are compositionally biased toward low complexity: residues 3244 to 3266 and 3276 to 3289; these read SLSS…ARSP and GPSA…SGLE.

Heterophilic interaction with FAT4; this interaction affects their respective protein levels. As to expression, expressed in fibroblasts but not in melanocytes or keratinocytes.

The protein localises to the cell membrane. Functionally, calcium-dependent cell-adhesion protein. Mediates functions in neuroprogenitor cell proliferation and differentiation. In the heart, has a critical role for proper morphogenesis of the mitral valve, acting in the regulation of cell migration involved in valve formation. The protein is Protocadherin-16 (DCHS1) of Homo sapiens (Human).